A 115-amino-acid chain; its full sequence is NADH-ubiquinone oxidoreductase chain 3 (115 aa).

Helical transmembrane passes span 3–23, 55–75, and 87–107; these read IMITLFINMSLASLLVLIAFW, FFLVAITFLLFDLEIALLLPL, and MLTTALVLILLLALGLAYEWL.

It belongs to the complex I subunit 3 family. As to quaternary structure, core subunit of respiratory chain NADH dehydrogenase (Complex I) which is composed of 45 different subunits. Interacts with TMEM186. Interacts with TMEM242.

Its subcellular location is the mitochondrion inner membrane. It catalyses the reaction a ubiquinone + NADH + 5 H(+)(in) = a ubiquinol + NAD(+) + 4 H(+)(out). Core subunit of the mitochondrial membrane respiratory chain NADH dehydrogenase (Complex I) which catalyzes electron transfer from NADH through the respiratory chain, using ubiquinone as an electron acceptor. Essential for the catalytic activity of complex I. In Dasypus novemcinctus (Nine-banded armadillo), this protein is NADH-ubiquinone oxidoreductase chain 3.